A 203-amino-acid polypeptide reads, in one-letter code: Thymidylate kinase (203 aa).

10–17 (GTEGSGKS) serves as a coordination point for ATP.

It belongs to the thymidylate kinase family.

It carries out the reaction dTMP + ATP = dTDP + ADP. Phosphorylation of dTMP to form dTDP in both de novo and salvage pathways of dTTP synthesis. This Dichelobacter nodosus (strain VCS1703A) protein is Thymidylate kinase.